A 554-amino-acid chain; its full sequence is Carboxypeptidase Y homolog A (554 aa).

An N-terminal signal peptide occupies residues 1-17 (MRIAASTVLFGAASAAS). A propeptide spanning residues 18–137 (FQQQAQHVLS…RLEEYNLRVK (120 aa)) is cleaved from the precursor. Intrachain disulfides connect cysteine 191–cysteine 431, cysteine 325–cysteine 339, cysteine 349–cysteine 372, cysteine 356–cysteine 365, and cysteine 394–cysteine 401. The N-linked (GlcNAc...) asparagine glycan is linked to asparagine 222. Serine 278 is a catalytic residue. Aspartate 470 is an active-site residue. A glycan (N-linked (GlcNAc...) asparagine) is linked at asparagine 518. Residue histidine 529 is part of the active site.

It belongs to the peptidase S10 family.

The protein resides in the vacuole. The catalysed reaction is Release of a C-terminal amino acid with broad specificity.. In terms of biological role, vacuolar carboxypeptidase involved in degradation of small peptides. Digests preferentially peptides containing an aliphatic or hydrophobic residue in P1' position, as well as methionine, leucine or phenylalanine in P1 position of ester substrate. This Chaetomium globosum (strain ATCC 6205 / CBS 148.51 / DSM 1962 / NBRC 6347 / NRRL 1970) (Soil fungus) protein is Carboxypeptidase Y homolog A (CPYA).